The chain runs to 345 residues: L-Ala-D/L-Glu epimerase (345 aa).

Positions 134 and 159 each coordinate substrate. The Proton acceptor; specific for (R)-substrate epimerization role is filled by Lys-161. Asp-188 provides a ligand contact to Mg(2+). Asn-190 contacts substrate. Mg(2+) contacts are provided by Glu-216 and Asp-241. Lys-265 (proton acceptor; specific for (S)-substrate epimerization) is an active-site residue. Positions 292, 317, and 319 each coordinate substrate.

It belongs to the mandelate racemase/muconate lactonizing enzyme family. Requires Mg(2+) as cofactor.

The enzyme catalyses L-alanyl-L-glutamate = L-alanyl-D-glutamate. The protein operates within cell wall degradation; peptidoglycan degradation. Functionally, catalyzes the epimerization of L-Ala-D-Glu to L-Ala-L-Glu and has probably a role in the metabolism of the murein peptide, of which L-Ala-D-Glu is a component. Is also able to catalyze the reverse reaction and the epimerization of a broad range of other dipeptides; is most efficient with L-Ala-D/L-Phe, L-Ala-D/L-Tyr, and L-Ala-D/L-His. The protein is L-Ala-D/L-Glu epimerase of Thermotoga maritima (strain ATCC 43589 / DSM 3109 / JCM 10099 / NBRC 100826 / MSB8).